The following is a 346-amino-acid chain: Upstream stimulatory factor 2 (346 aa).

Disordered regions lie at residues 1–44 and 215–244; these read MDML…PGAE and APRTHPYSPKIDGTRTPRDERRRAQHNEVE. Positions 11 to 20 are enriched in low complexity; the sequence is AASATAAAAA. A compositionally biased stretch (basic and acidic residues) spans 226–244; sequence DGTRTPRDERRRAQHNEVE. The bHLH domain maps to 235–290; the sequence is RRRAQHNEVERRRRDKINNWIVQLSKIIPDCNADNSKTGASKGGILSKACDYIREL. The leucine-zipper stretch occupies residues 307-328; sequence LQMDNELLRQQIEELKNENALL.

In terms of assembly, interacts with MAF. Efficient DNA binding requires dimerization with another bHLH protein. Binds DNA as a homodimer or a heterodimer (USF1/USF2). In vivo, the USF1/USF2A heterodimer represents over 66% of the usf binding activity whereas the USF1 and USF2A homodimers represent less than 10%. The USF1/USF2B heterodimer accounted for almost 15% in some cell. Ubiquitous.

The protein localises to the nucleus. Functionally, transcription factor that binds to a symmetrical DNA sequence (E-boxes) (5'-CACGTG-3') that is found in a variety of viral and cellular promoters. The polypeptide is Upstream stimulatory factor 2 (USF2) (Homo sapiens (Human)).